A 308-amino-acid chain; its full sequence is 4-hydroxyproline 2-epimerase (308 aa).

Catalysis depends on Cys-88, which acts as the Proton acceptor. Residues 89–90 (GH), His-208, and Asp-232 each bind substrate. Residue Cys-236 is the Proton donor of the active site. A substrate-binding site is contributed by 237–238 (GT).

This sequence belongs to the proline racemase family.

It carries out the reaction trans-4-hydroxy-L-proline = cis-4-hydroxy-D-proline. In terms of biological role, catalyzes the epimerization of trans-4-hydroxy-L-proline (t4LHyp) to cis-4-hydroxy-D-proline (c4DHyp). Is likely involved in a degradation pathway that converts t4LHyp to alpha-ketoglutarate. Can also catalyze the epimerization of trans-3-hydroxy-L-proline (t3LHyp) to cis-3-hydroxy-D-proline (c3DHyp), albeit with 200-fold lower efficiency. This Pseudomonas putida (strain ATCC 700007 / DSM 6899 / JCM 31910 / BCRC 17059 / LMG 24140 / F1) protein is 4-hydroxyproline 2-epimerase.